A 315-amino-acid chain; its full sequence is Acetyl-coenzyme A carboxylase carboxyl transferase subunit alpha (315 aa).

Residues 35 to 289 enclose the CoA carboxyltransferase C-terminal domain; the sequence is KLSKKRFELM…RKAVAAELKI (255 aa).

This sequence belongs to the AccA family. As to quaternary structure, acetyl-CoA carboxylase is a heterohexamer composed of biotin carboxyl carrier protein (AccB), biotin carboxylase (AccC) and two subunits each of ACCase subunit alpha (AccA) and ACCase subunit beta (AccD).

Its subcellular location is the cytoplasm. It catalyses the reaction N(6)-carboxybiotinyl-L-lysyl-[protein] + acetyl-CoA = N(6)-biotinyl-L-lysyl-[protein] + malonyl-CoA. It participates in lipid metabolism; malonyl-CoA biosynthesis; malonyl-CoA from acetyl-CoA: step 1/1. Functionally, component of the acetyl coenzyme A carboxylase (ACC) complex. First, biotin carboxylase catalyzes the carboxylation of biotin on its carrier protein (BCCP) and then the CO(2) group is transferred by the carboxyltransferase to acetyl-CoA to form malonyl-CoA. The sequence is that of Acetyl-coenzyme A carboxylase carboxyl transferase subunit alpha from Francisella tularensis subsp. mediasiatica (strain FSC147).